A 265-amino-acid chain; its full sequence is Cell adhesion molecule CEACAM10 (265 aa).

The first 33 residues, 1-33 (MELASAHLHKGQVPWVGLLLTASLLTYWSPATT), serve as a signal peptide directing secretion. 2 Ig-like V-type domains span residues 35-142 (QVTV…HVHP) and 155-262 (QVTV…NVHA). N-linked (GlcNAc...) asparagine glycosylation is found at asparagine 44, asparagine 87, and asparagine 224.

Belongs to the immunoglobulin superfamily. CEA family. Abundant in seminal vesicle and traces in epididymis and prostate (at protein level). Highly expressed in seminal vesicle, minor in colon and placenta and, to a lesser extent, in small intestine, caecum, stomach, salivary gland and bone marrow.

It is found in the secreted. Its subcellular location is the extracellular space. In terms of biological role, may interact with other CEACAM proteins on the sperm surface. This chain is Cell adhesion molecule CEACAM10, found in Mus musculus (Mouse).